The sequence spans 430 residues: UDP-N-acetylglucosamine 1-carboxyvinyltransferase (430 aa).

22 to 23 (KN) serves as a coordination point for phosphoenolpyruvate. A UDP-N-acetyl-alpha-D-glucosamine-binding site is contributed by R102. Catalysis depends on C126, which acts as the Proton donor. The residue at position 126 (C126) is a 2-(S-cysteinyl)pyruvic acid O-phosphothioketal. Residues 131–135 (RPVDL), 172–175 (KVSV), D317, and I339 contribute to the UDP-N-acetyl-alpha-D-glucosamine site.

This sequence belongs to the EPSP synthase family. MurA subfamily.

The protein resides in the cytoplasm. The catalysed reaction is phosphoenolpyruvate + UDP-N-acetyl-alpha-D-glucosamine = UDP-N-acetyl-3-O-(1-carboxyvinyl)-alpha-D-glucosamine + phosphate. The protein operates within cell wall biogenesis; peptidoglycan biosynthesis. In terms of biological role, cell wall formation. Adds enolpyruvyl to UDP-N-acetylglucosamine. The protein is UDP-N-acetylglucosamine 1-carboxyvinyltransferase of Sinorhizobium medicae (strain WSM419) (Ensifer medicae).